A 154-amino-acid polypeptide reads, in one-letter code: Crossover junction endodeoxyribonuclease RuvC (154 aa).

Active-site residues include D7, E67, and D139. Mg(2+)-binding residues include D7, E67, and D139.

The protein belongs to the RuvC family. As to quaternary structure, homodimer which binds Holliday junction (HJ) DNA. The HJ becomes 2-fold symmetrical on binding to RuvC with unstacked arms; it has a different conformation from HJ DNA in complex with RuvA. In the full resolvosome a probable DNA-RuvA(4)-RuvB(12)-RuvC(2) complex forms which resolves the HJ. Mg(2+) is required as a cofactor.

It is found in the cytoplasm. It catalyses the reaction Endonucleolytic cleavage at a junction such as a reciprocal single-stranded crossover between two homologous DNA duplexes (Holliday junction).. Its function is as follows. The RuvA-RuvB-RuvC complex processes Holliday junction (HJ) DNA during genetic recombination and DNA repair. Endonuclease that resolves HJ intermediates. Cleaves cruciform DNA by making single-stranded nicks across the HJ at symmetrical positions within the homologous arms, yielding a 5'-phosphate and a 3'-hydroxyl group; requires a central core of homology in the junction. The consensus cleavage sequence is 5'-(A/T)TT(C/G)-3'. Cleavage occurs on the 3'-side of the TT dinucleotide at the point of strand exchange. HJ branch migration catalyzed by RuvA-RuvB allows RuvC to scan DNA until it finds its consensus sequence, where it cleaves and resolves the cruciform DNA. The chain is Crossover junction endodeoxyribonuclease RuvC from Synechococcus sp. (strain CC9902).